A 962-amino-acid chain; its full sequence is Glycine dehydrogenase (decarboxylating) (962 aa).

Residue Lys709 is modified to N6-(pyridoxal phosphate)lysine.

This sequence belongs to the GcvP family. In terms of assembly, the glycine cleavage system is composed of four proteins: P, T, L and H. Pyridoxal 5'-phosphate serves as cofactor.

It carries out the reaction N(6)-[(R)-lipoyl]-L-lysyl-[glycine-cleavage complex H protein] + glycine + H(+) = N(6)-[(R)-S(8)-aminomethyldihydrolipoyl]-L-lysyl-[glycine-cleavage complex H protein] + CO2. Its function is as follows. The glycine cleavage system catalyzes the degradation of glycine. The P protein binds the alpha-amino group of glycine through its pyridoxal phosphate cofactor; CO(2) is released and the remaining methylamine moiety is then transferred to the lipoamide cofactor of the H protein. This Shewanella amazonensis (strain ATCC BAA-1098 / SB2B) protein is Glycine dehydrogenase (decarboxylating).